Reading from the N-terminus, the 44-residue chain is Mu-conotoxin-like Cal 12.1.3b (44 aa).

4 cysteine pairs are disulfide-bonded: Cys-3/Cys-16, Cys-11/Cys-28, Cys-18/Cys-33, and Cys-27/Cys-38. Pro-23 bears the 4-hydroxyproline mark. Residues Trp-36 and Trp-37 each carry the 6'-bromotryptophan modification. Position 39 is a 4-hydroxyproline (Pro-39). Trp-43 carries the 6'-bromotryptophan modification.

Expressed by the venom duct.

The protein localises to the secreted. Functionally, mu-conotoxins block voltage-gated sodium channels. This toxin reversibly blocks voltage-gated sodium channel in cephalopods, with no alteration in the voltage dependence of sodium conductance or on the kinetics of inactivation. This Californiconus californicus (California cone) protein is Mu-conotoxin-like Cal 12.1.3b.